We begin with the raw amino-acid sequence, 622 residues long: Fanconi anemia group G protein (622 aa).

At serine 7 the chain carries Phosphoserine. TPR repeat units follow at residues valine 246–tryptophan 279, serine 344–serine 377, serine 453–alanine 486, and alanine 514–asparagine 547.

Belongs to the multisubunit FA complex composed of FANCA, FANCB, FANCC, FANCE, FANCF, FANCG, FANCL/PHF9 and FANCM. The complex is not found in FA patients. In complex with FANCF, FANCA and FANCL, but not with FANCC, nor FANCE, interacts with HES1; this interaction may be essential for the stability and nuclear localization of FA core complex proteins. The complex with FANCC and FANCG may also include EIF2AK2 and HSP70. When phosphorylated at Ser-7, forms a complex with BRCA2, FANCD2 and XRCC3. Highly expressed in testis and thymus. Found in lymphoblasts.

It localises to the nucleus. Its subcellular location is the cytoplasm. DNA repair protein that may operate in a postreplication repair or a cell cycle checkpoint function. May be implicated in interstrand DNA cross-link repair and in the maintenance of normal chromosome stability. Candidate tumor suppressor gene. The chain is Fanconi anemia group G protein (FANCG) from Homo sapiens (Human).